The sequence spans 204 residues: Imidazole glycerol phosphate synthase subunit HisH (204 aa).

The Glutamine amidotransferase type-1 domain maps to Met1 to Leu204. Cys80 functions as the Nucleophile in the catalytic mechanism. Catalysis depends on residues His186 and Glu188.

Heterodimer of HisH and HisF.

Its subcellular location is the cytoplasm. It catalyses the reaction 5-[(5-phospho-1-deoxy-D-ribulos-1-ylimino)methylamino]-1-(5-phospho-beta-D-ribosyl)imidazole-4-carboxamide + L-glutamine = D-erythro-1-(imidazol-4-yl)glycerol 3-phosphate + 5-amino-1-(5-phospho-beta-D-ribosyl)imidazole-4-carboxamide + L-glutamate + H(+). The enzyme catalyses L-glutamine + H2O = L-glutamate + NH4(+). Its pathway is amino-acid biosynthesis; L-histidine biosynthesis; L-histidine from 5-phospho-alpha-D-ribose 1-diphosphate: step 5/9. In terms of biological role, IGPS catalyzes the conversion of PRFAR and glutamine to IGP, AICAR and glutamate. The HisH subunit catalyzes the hydrolysis of glutamine to glutamate and ammonia as part of the synthesis of IGP and AICAR. The resulting ammonia molecule is channeled to the active site of HisF. The polypeptide is Imidazole glycerol phosphate synthase subunit HisH (hisH) (Leptospira borgpetersenii).